The sequence spans 203 residues: Probable flagellin 1 (203 aa).

Residues 1–6 constitute a propeptide that is removed on maturation; that stretch reads MRRRRG.

Belongs to the archaeal flagellin family.

The protein resides in the archaeal flagellum. Functionally, flagellin is the subunit protein which polymerizes to form the filaments of archaeal flagella. The polypeptide is Probable flagellin 1 (flaB1) (Aeropyrum pernix (strain ATCC 700893 / DSM 11879 / JCM 9820 / NBRC 100138 / K1)).